A 297-amino-acid chain; its full sequence is Sirohydrochlorin cobaltochelatase CbiKP (297 aa).

Positions 1–28 (MSRHPMVTRLLCLVFSCLIILACSPAFA) are cleaved as a signal peptide. Residue His-124 participates in heme binding. His-182 acts as the Proton acceptor in catalysis. His-182, Glu-212, and His-244 together coordinate Co(2+).

It belongs to the CbiK family. Homotetramer; dimer of dimers.

It localises to the periplasm. It carries out the reaction Co-sirohydrochlorin + 2 H(+) = sirohydrochlorin + Co(2+). The enzyme catalyses siroheme + 2 H(+) = sirohydrochlorin + Fe(2+). Catalyzes the insertion of Co(2+) into sirohydrochlorin. To a lesser extent, is also able to insert Fe(2+) into sirohydrochlorin, yielding siroheme. Its periplasmic location means that it cannot participate in cobalamin biosynthesis and its genomic environment suggests it is likely to be associated with a heme or metal transport system. This Nitratidesulfovibrio vulgaris (strain ATCC 29579 / DSM 644 / CCUG 34227 / NCIMB 8303 / VKM B-1760 / Hildenborough) (Desulfovibrio vulgaris) protein is Sirohydrochlorin cobaltochelatase CbiKP (cbiKp).